Reading from the N-terminus, the 808-residue chain is Probable inorganic carbon transporter subunit DabA (808 aa).

Cys-335, Asp-337, His-497, and Cys-512 together coordinate Zn(2+).

The protein belongs to the inorganic carbon transporter (TC 9.A.2) DabA family. As to quaternary structure, forms a complex with DabB. It depends on Zn(2+) as a cofactor.

The protein resides in the cell inner membrane. Part of an energy-coupled inorganic carbon pump. The protein is Probable inorganic carbon transporter subunit DabA of Rhodopseudomonas palustris (strain ATCC BAA-98 / CGA009).